We begin with the raw amino-acid sequence, 437 residues long: tRNA(Ile2) 2-agmatinylcytidine synthetase TiaS (437 aa).

This sequence belongs to the TiaS family.

It localises to the cytoplasm. It catalyses the reaction cytidine(34) in tRNA(Ile2) + agmatine + ATP + H2O = 2-agmatinylcytidine(34) in tRNA(Ile2) + AMP + 2 phosphate + 2 H(+). In terms of biological role, ATP-dependent agmatine transferase that catalyzes the formation of 2-agmatinylcytidine (agm2C) at the wobble position (C34) of tRNA(Ile2), converting the codon specificity from AUG to AUA. The chain is tRNA(Ile2) 2-agmatinylcytidine synthetase TiaS from Acidilobus saccharovorans (strain DSM 16705 / JCM 18335 / VKM B-2471 / 345-15).